A 938-amino-acid chain; its full sequence is MEQLKTIGRELAMGSQGGFGQSKEFLDLVKSIGEARSKAEEDRIVLSEVDILKRRLLEPDIPKRKMKEYIIRLVYIEMLGHDASFGYIYAVKMTHDDNLLLKRTGYLAVTLFLNEDHDLIILIVNTIQKDLRSDNYLVVCAALNAICRLINEETIPAVLPQVVELLNHQKEAVRKKAIMALHRFHRKSPSSVSHLVSNFRKRLCDNDPGVMGATLCPLFDLISEDVNSYKDLVSSFVSILKQVTERRLPKSYDYHQMPAPFIQIKLLKIMALLGSGDKNASDIMSMVLGDLFRKCDSSTNIGNAILYECIRCISCILPNPKLLEAAADAISKFLKSDSHNLKYMGIDGLGRLIKISPDIAEQHQLAVIDCLEDPDDTLKRKTFELLYKMTKSSNVEVIVDRMIDYMISINDNHYKTEIASRCVELAEQFAPSNQWFIQIMNKVFEHAGDLVNIKVAHNLMRLIAEGFGEDDDDADSKLRLSAVESYLQLISEPKLPSLFLQVISWVLGEYGTADGKYSASYISGKLCDVADAYSSDETVKGYAVSALMKIYAFEIASGRKVDVLPECQSLIEELLASHSTDLQQRAYELQALLALDARAVETILPLDASCEDIEVDKDLSFLNGYIQQAIESGAQPYISERERSGMFETTDYHPQDHHEVPTHALRFEAYELPKPSVPPQASNELVPVPEPSYYSESHQPISTSLVSERESSEIKLRLDGVKQKWGRPSYQSTTAASSTTPQAANGISTHSDAGVGSSSSKPRSSYEPKKPEIDPEKQRLAASLFGGSSSRTDKRSSSGGHKPAKGTANKTATVPKENQTPVQPPPDLLDFGEPTATTATAMDPFKELEGLMDSSSQDGGSSDVMGLYSDAAPVTTTTSVDSLLSELSDSSKGNSRTYQPQTSKGPNTKEALEKDALVRQMGVNPTSQNPTLFKDLLG.

10 HEAT repeats span residues Asp118–Glu153, Thr154–Ser190, Val192–Asn227, Ser234–Leu272, Lys321–Asp358, Ile359–Val395, Val397–Pro431, Lys454–Leu495, Tyr517–Ala556, and Asp562–Glu601. 4 disordered regions span residues Glu690–Ser712, Trp725–Leu867, Val880–Leu912, and Arg919–Gly938. A compositionally biased stretch (polar residues) spans Tyr694–Val706. A compositionally biased stretch (low complexity) spans Pro728 to Ala744. A compositionally biased stretch (basic and acidic residues) spans Ser764–Arg779. Residues Ala808–Pro821 are compositionally biased toward polar residues. Composition is skewed to low complexity over residues Asp853–Asp863 and Val880–Ser891. Residues Val874–Ala911 form an HEAT 11 repeat. A compositionally biased stretch (polar residues) spans Lys892–Pro906.

This sequence belongs to the adaptor complexes large subunit family. In terms of assembly, adaptor protein complex 4 (AP-4) is a heterotetramer composed of two large adaptins (epsilon-type subunit and beta-type subunit), a medium adaptin (mu-type subunit) and a small adaptin (sigma-type subunit).

It localises to the golgi apparatus. The protein resides in the trans-Golgi network. Its subcellular location is the membrane. It is found in the coated pit. Its function is as follows. Subunit of novel type of clathrin- or non-clathrin-associated protein coat involved in targeting proteins from the trans-Golgi network (TGN) to the endosomal-lysosomal system. The protein is AP-4 complex subunit epsilon of Arabidopsis thaliana (Mouse-ear cress).